Reading from the N-terminus, the 817-residue chain is Rho GTPase-activating protein gacII (817 aa).

The region spanning 20-204 is the Rho-GAP domain; sequence TTIVKIGTPK…TLIEEFQYIS (185 aa). The SH3 domain maps to 238 to 298; sequence EDYLIAKANT…SQTYVDIIDI (61 aa). The segment covering 318-339 has biased composition (low complexity); it reads ASTILHTPPTSSSSSSSSSSSS. Disordered regions lie at residues 318–638, 691–771, and 783–817; these read ASTI…NIPV, LGGQ…QQQQ, and LPPQ…FNKN. Over residues 340-358 the composition is skewed to polar residues; sequence ILLTDNQPKLCSSTPRINN. Low complexity predominate over residues 359–391; that stretch reads SPSSFSPSLSSTTPQLLVQQSPRQSPRQIPSIS. Over residues 396–438 the composition is skewed to polar residues; that stretch reads PNNTNQPSFGHGTLQRTSTGYFSSKPLSISQPINMSKPTNMSP. Residues 461–471 are compositionally biased toward pro residues; sequence PPLPTKPPPLT. A compositionally biased stretch (low complexity) spans 472-498; it reads IPSSSSLPTTPIKQQPQQPIQQPLTPQ. Over residues 509-532 the composition is skewed to polar residues; that stretch reads LSSSVNTANTGNCANILSPNSDRY. Low complexity-rich tracts occupy residues 534 to 568, 577 to 587, and 607 to 624; these read SSRS…SSTS, KSKSSKNSPSK, and ITTT…TIAT. Over residues 625–635 the composition is skewed to pro residues; sequence TPPPPSKPLPN. A compositionally biased stretch (polar residues) spans 705–722; the sequence is KSQSSYLDNNNLPSRNTN. A compositionally biased stretch (pro residues) spans 725–734; that stretch reads NLPPRPPPLN. 2 stretches are compositionally biased toward low complexity: residues 735–744 and 752–771; these read IPQQQQQYKP and QSPQ…QQQQ. Positions 785–803 are enriched in polar residues; that stretch reads PQNTNLSGKNLQRSSTSML. Residues 807–817 show a composition bias toward pro residues; sequence LPPPPFSFNKN.

Its subcellular location is the cytoplasm. Functionally, rho GTPase-activating protein involved in the signal transduction pathway. The chain is Rho GTPase-activating protein gacII (gacII) from Dictyostelium discoideum (Social amoeba).